Consider the following 547-residue polypeptide: Cytochrome P450 monooxygenase fsoD (547 aa).

The chain crosses the membrane as a helical span at residues 3–23 (DITLAAVSIGLFFYVGARAVL). Cysteine 490 provides a ligand contact to heme.

The protein belongs to the cytochrome P450 family. Requires heme as cofactor.

The protein localises to the membrane. It carries out the reaction isomotiol + reduced [NADPH--hemoprotein reductase] + O2 = 2alpha-hydroxyisomotiol + oxidized [NADPH--hemoprotein reductase] + H2O + H(+). Its pathway is secondary metabolite biosynthesis; terpenoid biosynthesis. In terms of biological role, cytochrome P450 monooxygenase; part of the gene cluster that mediates the biosynthesis of the enfumafungin-type antibiotic, fuscoatroside. Within the pathway, fsoD catalyzes the hydroxylation at position C2 of isomotiol to produce 2-alpha-hydroxy-isomotiol. FsoD may also hydroxylate the intermediates 3-O-(beta-D-glucopyranosyl)-isomotiol and 2-deacetoxy-fuscoatroside at the same position C2. The fuscoatroside biosynthesis is initiated by the cyclization of 2,3(S)-oxidosqualene through FsoA's terpene cyclase (TC) domain, leading to the formation of the fernane skeleton isomotiol, harboring a fernane triterpene skeleton with a C8-C9 double bond. Subsequently, C2-alpha-hydroxylation mediated by fsoD results in the production of 2-alpha-hydroxy-isomotiol, which is further acetylated by fsoF. The glycosyltransferase (GT) domain of FsoA may convert isomotiol, 2-alpha-hydroxy-isomotiol, and the acetylated derivative of 2-alpha-hydroxy-isomotiol into their corresponding glycosides 3-O-(beta-D-glucopyranosyl)-isomotiol, 3-O-(beta-D-glucopyranosyl)-2-alpha-hydroxy-isomotiol, and 3-O-(beta-D-glucopyranosyl)-2-alpha-acetoxy-isomotiol, which then undergo oxidative cleavage under the action of fsoE to form s 2-deacetoxy-fuscoatroside, 2-deacetyl-fuscoatroside, and fuscoatroside, respectively. Although hydroxylation followed by acetylation of 3-O-(beta-D-glucopyranosyl)-isomotiol and 2-deacetoxy-fuscoatroside by fsoD and fsoF could not be ruled out, this process is likely to occur with difficulty due to bulky steric hindrance caused by the presence of a glycan at C3 in these compounds. Interestingly, fsoE can also utilize the aglycones isomotiol and 2-alpha-hydroxy-isomotiol as substrates to generate 19-beta-hydroxy-isomotiol and 2-alpha,19-beta-dihydroxy-isomotiol, respectively. These reactions occur with lower efficiency. Finally, fsoE can further convert 2-alpha,19-beta-dihydroxy-isomotiol into 2-alpha-hydroxy-ismotiol-19-one and 2-alpha-hydroxy-ismotiol-19-one into 2-deacetyl-3-deglucopyranosyl-fuscoatroside. The chain is Cytochrome P450 monooxygenase fsoD from Humicola fuscoatra.